Reading from the N-terminus, the 137-residue chain is Large-conductance mechanosensitive channel (137 aa).

The next 2 membrane-spanning stretches (helical) occupy residues 9–29 (AFAVKGNVVDMAVGIIIGAAF) and 79–99 (IQTILDFVIVAFAIFMGVKAI).

It belongs to the MscL family. Homopentamer.

The protein localises to the cell inner membrane. In terms of biological role, channel that opens in response to stretch forces in the membrane lipid bilayer. May participate in the regulation of osmotic pressure changes within the cell. In Pseudomonas aeruginosa (strain UCBPP-PA14), this protein is Large-conductance mechanosensitive channel.